The sequence spans 580 residues: Multidrug resistance-like ATP-binding protein MdlB (580 aa).

Residues 25-310 (IILAFFLLLS…ITIQQSILQQ (286 aa)) enclose the ABC transmembrane type-1 domain. A run of 5 helical transmembrane segments spans residues 26–46 (ILAFFLLLSGATSEVLGPILI), 61–81 (FQLILIIIVIFIMLQILAVFF), 142–162 (VGPTFFRSITLIIIILFAMFT), 165–185 (WHMAIITIFIIPLVIIVMSIY), and 258–278 (LLSALVLCSFMFLFSYFSIGV). The region spanning 341–575 (INIKNLSFKY…KGFYWKMYNF (235 aa)) is the ABC transporter domain. 375 to 382 (GQTGSGKS) is an ATP binding site.

Belongs to the ABC transporter superfamily. Drug exporter-2 (TC 3.A.1.117) family.

Its subcellular location is the cell membrane. The enzyme catalyses ATP + H2O + xenobioticSide 1 = ADP + phosphate + xenobioticSide 2.. This is Multidrug resistance-like ATP-binding protein MdlB (mdlB) from Buchnera aphidicola subsp. Schizaphis graminum (strain Sg).